The following is a 305-amino-acid chain: tRNA dimethylallyltransferase (305 aa).

An ATP-binding site is contributed by 11–18; it reads GPTAVGKT. Residue 13-18 participates in substrate binding; it reads TAVGKT. The tract at residues 36-39 is interaction with substrate tRNA; it reads DSMQ.

This sequence belongs to the IPP transferase family. As to quaternary structure, monomer. Requires Mg(2+) as cofactor.

It catalyses the reaction adenosine(37) in tRNA + dimethylallyl diphosphate = N(6)-dimethylallyladenosine(37) in tRNA + diphosphate. In terms of biological role, catalyzes the transfer of a dimethylallyl group onto the adenine at position 37 in tRNAs that read codons beginning with uridine, leading to the formation of N6-(dimethylallyl)adenosine (i(6)A). The sequence is that of tRNA dimethylallyltransferase from Listeria monocytogenes serotype 4b (strain CLIP80459).